A 220-amino-acid chain; its full sequence is Iron-sulfur cluster repair protein YtfE (220 aa).

It belongs to the RIC family. YtfE subfamily. As to quaternary structure, homodimer.

The protein localises to the cytoplasm. Di-iron-containing protein involved in the repair of iron-sulfur clusters damaged by oxidative and nitrosative stress conditions. The chain is Iron-sulfur cluster repair protein YtfE from Escherichia coli O81 (strain ED1a).